Here is a 908-residue protein sequence, read N- to C-terminus: Oxysterol-binding protein 2 (908 aa).

The interval 42-112 (SAFGSGPASK…GLWPGSENGT (71 aa)) is disordered. Polar residues predominate over residues 81–90 (EPGSQTTSVP). The PH domain maps to 179-271 (LDSYKGWLLK…WITALELAKA (93 aa)). Disordered regions lie at residues 279-299 (TQSD…DNSE), 413-445 (RAFC…SEED), and 822-843 (LMER…EKQR). Serine 284 is modified (phosphoserine). Over residues 424–437 (SSSKSFSEGSFLTS) the composition is skewed to low complexity.

This sequence belongs to the OSBP family. As to quaternary structure, interacts with CCDC159. Expressed in the testis (at protein level). Expressed in postmeiotic germ cells of the testis.

The protein resides in the membrane. It localises to the cytoplasmic vesicle. The protein localises to the secretory vesicle. It is found in the acrosome. Its function is as follows. Binds 7-ketocholesterol. Acts during spermatid development where its function is required prior to the removal of cytoplasm from the sperm head. The sequence is that of Oxysterol-binding protein 2 (Osbp2) from Mus musculus (Mouse).